We begin with the raw amino-acid sequence, 93 residues long: Small ribosomal subunit protein bS6 (93 aa).

Belongs to the bacterial ribosomal protein bS6 family.

Binds together with bS18 to 16S ribosomal RNA. In Phytoplasma australiense, this protein is Small ribosomal subunit protein bS6.